Consider the following 30-residue polypeptide: Dendrotoxin A (30 aa).

Cysteines 3 and 22 form a disulfide.

It belongs to the three-finger toxin family. Short-chain subfamily. Acn-esterase inhibitor sub-subfamily. In terms of processing, contains 4 disulfide bonds. Expressed by the venom gland.

Its subcellular location is the secreted. Its function is as follows. Inhibits acetylcholinesterase. Has been described to inhibit both the slowly and the rapidly inactivating phases of potassium efflux. The polypeptide is Dendrotoxin A (Dendroaspis angusticeps (Eastern green mamba)).